Consider the following 603-residue polypeptide: Sorting nexin-41 (603 aa).

The tract at residues 1–36 (MNSFRESDEEDNNPFSGTNHLYASGIGAVPEGDDDF) is disordered. The region spanning 121–241 (AEGSLGALRI…QKFLNPEYIW (121 aa)) is the PX domain. Residues R159, S161, K185, and R208 each contribute to the a 1,2-diacyl-sn-glycero-3-phospho-(1D-myo-inositol-3-phosphate) site.

It belongs to the sorting nexin family.

The protein resides in the endosome membrane. It localises to the endomembrane system. Functionally, may be required for cytoplasm to vacuole transport (Cvt) and pexophagy. The polypeptide is Sorting nexin-41 (SNX41) (Eremothecium gossypii (strain ATCC 10895 / CBS 109.51 / FGSC 9923 / NRRL Y-1056) (Yeast)).